A 295-amino-acid polypeptide reads, in one-letter code: Acetyl-coenzyme A carboxylase carboxyl transferase subunit beta (295 aa).

Residues 1–20 (MSWLSKLMPSGIRTENTPAK) form a disordered region. Residues 28–295 (LWEKCSNCGS…QPHPQDADAA (268 aa)) enclose the CoA carboxyltransferase N-terminal domain. 4 residues coordinate Zn(2+): C32, C35, C51, and C54. The segment at 32 to 54 (CSNCGSALYGPELEENLEVCPKC) adopts a C4-type zinc-finger fold.

The protein belongs to the AccD/PCCB family. Acetyl-CoA carboxylase is a heterohexamer composed of biotin carboxyl carrier protein (AccB), biotin carboxylase (AccC) and two subunits each of ACCase subunit alpha (AccA) and ACCase subunit beta (AccD). It depends on Zn(2+) as a cofactor.

It is found in the cytoplasm. The catalysed reaction is N(6)-carboxybiotinyl-L-lysyl-[protein] + acetyl-CoA = N(6)-biotinyl-L-lysyl-[protein] + malonyl-CoA. Its pathway is lipid metabolism; malonyl-CoA biosynthesis; malonyl-CoA from acetyl-CoA: step 1/1. In terms of biological role, component of the acetyl coenzyme A carboxylase (ACC) complex. Biotin carboxylase (BC) catalyzes the carboxylation of biotin on its carrier protein (BCCP) and then the CO(2) group is transferred by the transcarboxylase to acetyl-CoA to form malonyl-CoA. This is Acetyl-coenzyme A carboxylase carboxyl transferase subunit beta from Xanthomonas axonopodis pv. citri (strain 306).